Consider the following 232-residue polypeptide: Glutathione S-transferase U10 (232 aa).

Residues 6–85 (SKVILHGTWI…YIDETWTNSP (80 aa)) form the GST N-terminal domain. Glutathione-binding positions include 16–17 (ST), 42–43 (NK), 56–57 (KI), and 69–70 (ES). The GST C-terminal domain occupies 91–226 (DPYERAQVRF…FIQKYRQKCL (136 aa)).

This sequence belongs to the GST superfamily. Tau family.

The protein localises to the cytoplasm. It localises to the cytosol. The enzyme catalyses RX + glutathione = an S-substituted glutathione + a halide anion + H(+). Functionally, may be involved in the conjugation of reduced glutathione to a wide number of exogenous and endogenous hydrophobic electrophiles and have a detoxification role against certain herbicides. This is Glutathione S-transferase U10 (GSTU10) from Arabidopsis thaliana (Mouse-ear cress).